We begin with the raw amino-acid sequence, 248 residues long: 2,3-dihydro-2,3-dihydroxybenzoate dehydrogenase (248 aa).

Trp9–Thr33 contacts NAD(+). Ser131 is a substrate binding site. Catalysis depends on Tyr144, which acts as the Proton acceptor.

It belongs to the short-chain dehydrogenases/reductases (SDR) family. As to quaternary structure, homotetramer; dimer of dimers. EntA and EntE interact together.

The enzyme catalyses (2S,3S)-2,3-dihydroxy-2,3-dihydrobenzoate + NAD(+) = 2,3-dihydroxybenzoate + NADH + H(+). It participates in siderophore biosynthesis; enterobactin biosynthesis. Its activity is regulated as follows. Inhibited by cis-2-hydroxy-3-cyclohexen-1-carboxylate, cis-2-hydroxycyclohexane-1-carboxylate and trans-2-hydroxycyclohexane-1-carboxylate. Its function is as follows. Involved in the biosynthesis of the siderophore enterobactin (enterochelin), which is a macrocyclic trimeric lactone of N-(2,3-dihydroxybenzoyl)-serine. Catalyzes the reversible NAD-dependent oxidation of the C3-hydroxyl group of 2,3-dihydro-2,3-dihydroxybenzoate (2,3-diDHB), producing the transient intermediate 2-hydroxy-3-oxo-4,6-cyclohexadiene-1-carboxylate, which undergoes rapid aromatization to the final product, 2,3-dihydroxybenzoate (2,3-DHB). Only the compounds with a C3-hydroxyl group such as methyl 2,3-dihydro-2,3-dihydroxybenzoate, methyl-3-hydroxy-1,4-cyclohexadiene-1-carboxylate, trans-3-hydroxy-2-cyclohexene-1-carboxylate, cis-3-hydroxy-4-cyclohexene-1-carboxylate, cis-3-hydroxycyclohexane-1-carboxylic acid are oxidized to the corresponding ketone products. The stereospecificity of the C3 allylic alcohol group oxidation is 3R in a 1R,3R dihydro substrate. It can also increase the DHB-AMP ligase activity of EntE by interaction EntE. The sequence is that of 2,3-dihydro-2,3-dihydroxybenzoate dehydrogenase from Escherichia coli (strain K12).